The primary structure comprises 431 residues: MSKNVVVIGTQWGDEGKGKIVDWLTDHARAVVRFQGGHNAGHTLWVNGKKTVVRLVPSGILRPDVECFIGNGVVLSPEALLKEIDELEAAGVNASARLKIAEGCPLILPYHIALDQAREAAKGDAKIGTTGRGIGPCYEDKVARRALKVIDLFDPARFETKLKENVDYYNFLLTNLFKAEPVSYEAILADTMKMAERIKPMVADVSRTLYDLDKAGTPILFEGAQGTLLDIDHGTYPYVTSSNCVAGAAAPGAGVPPQMLNYVLGIVKGYATRVGSGPFPTEQENEIGAFLAKRGNEFGSVTGRPRRCGWFDAAALKRSIQINGVSGLCVMKLDVMDGLEEIKLCTGYMLDGQKVDILPFGSDAVTKCEPVYETLPGWTGTTVGVKRWEDLPANAQAYLKRIEEVCGAPVDIVSTGPDREETIVLRHPFGL.

Residues 13 to 19 and 41 to 43 each bind GTP; these read GDEGKGK and GHT. Asp14 (proton acceptor) is an active-site residue. Residues Asp14 and Gly41 each coordinate Mg(2+). Residues 14 to 17, 39 to 42, Thr130, Arg144, Gln225, Thr240, and Arg304 contribute to the IMP site; these read DEGK and NAGH. The active-site Proton donor is the His42. 300–306 is a binding site for substrate; the sequence is SVTGRPR. GTP is bound by residues Arg306, 332-334, and 414-416; these read KLD and STG.

Belongs to the adenylosuccinate synthetase family. As to quaternary structure, homodimer. Mg(2+) serves as cofactor.

Its subcellular location is the cytoplasm. The enzyme catalyses IMP + L-aspartate + GTP = N(6)-(1,2-dicarboxyethyl)-AMP + GDP + phosphate + 2 H(+). It participates in purine metabolism; AMP biosynthesis via de novo pathway; AMP from IMP: step 1/2. Plays an important role in the de novo pathway of purine nucleotide biosynthesis. Catalyzes the first committed step in the biosynthesis of AMP from IMP. The chain is Adenylosuccinate synthetase 2 from Chromobacterium violaceum (strain ATCC 12472 / DSM 30191 / JCM 1249 / CCUG 213 / NBRC 12614 / NCIMB 9131 / NCTC 9757 / MK).